Consider the following 306-residue polypeptide: Aspartate carbamoyltransferase catalytic subunit (306 aa).

Carbamoyl phosphate is bound by residues arginine 55 and threonine 56. Lysine 84 is a binding site for L-aspartate. Carbamoyl phosphate-binding residues include arginine 105, histidine 133, and glutamine 136. L-aspartate contacts are provided by arginine 166 and arginine 227. Residues leucine 265 and proline 266 each contribute to the carbamoyl phosphate site.

Belongs to the aspartate/ornithine carbamoyltransferase superfamily. ATCase family. Heterododecamer (2C3:3R2) of six catalytic PyrB chains organized as two trimers (C3), and six regulatory PyrI chains organized as three dimers (R2).

The enzyme catalyses carbamoyl phosphate + L-aspartate = N-carbamoyl-L-aspartate + phosphate + H(+). Its pathway is pyrimidine metabolism; UMP biosynthesis via de novo pathway; (S)-dihydroorotate from bicarbonate: step 2/3. Its function is as follows. Catalyzes the condensation of carbamoyl phosphate and aspartate to form carbamoyl aspartate and inorganic phosphate, the committed step in the de novo pyrimidine nucleotide biosynthesis pathway. This chain is Aspartate carbamoyltransferase catalytic subunit, found in Neisseria gonorrhoeae (strain ATCC 700825 / FA 1090).